A 109-amino-acid chain; its full sequence is U-scoloptoxin(16)-Ssd1a (109 aa).

A signal peptide spans 1–23; sequence MTTSATVIIMVLCVGSLVIFSEG.

Contains 4 disulfide bonds. Expressed by the venom gland.

It localises to the secreted. This is U-scoloptoxin(16)-Ssd1a from Scolopendra dehaani (Thai centipede).